Here is a 317-residue protein sequence, read N- to C-terminus: tRNA dimethylallyltransferase (317 aa).

An ATP-binding site is contributed by 16-23; sequence GPTASGKS. 18–23 contacts substrate; the sequence is TASGKS. Interaction with substrate tRNA stretches follow at residues 41–44, 165–169, and 247–252; these read DSAQ, QRIQR, and RCVGYR.

The protein belongs to the IPP transferase family. As to quaternary structure, monomer. The cofactor is Mg(2+).

It carries out the reaction adenosine(37) in tRNA + dimethylallyl diphosphate = N(6)-dimethylallyladenosine(37) in tRNA + diphosphate. Its function is as follows. Catalyzes the transfer of a dimethylallyl group onto the adenine at position 37 in tRNAs that read codons beginning with uridine, leading to the formation of N6-(dimethylallyl)adenosine (i(6)A). In Nitrosomonas eutropha (strain DSM 101675 / C91 / Nm57), this protein is tRNA dimethylallyltransferase.